The chain runs to 300 residues: N-acetylmuramic acid 6-phosphate etherase 1 (300 aa).

Residues 57 to 220 (IATAFAQGGR…TTGAMIKSGK (164 aa)) form the SIS domain. Residue Glu-85 is the Proton donor of the active site. Residue Glu-116 is part of the active site.

It belongs to the GCKR-like family. MurNAc-6-P etherase subfamily. In terms of assembly, homodimer.

The enzyme catalyses N-acetyl-D-muramate 6-phosphate + H2O = N-acetyl-D-glucosamine 6-phosphate + (R)-lactate. The protein operates within amino-sugar metabolism; 1,6-anhydro-N-acetylmuramate degradation. Its pathway is amino-sugar metabolism; N-acetylmuramate degradation. It participates in cell wall biogenesis; peptidoglycan recycling. Specifically catalyzes the cleavage of the D-lactyl ether substituent of MurNAc 6-phosphate, producing GlcNAc 6-phosphate and D-lactate. Together with AnmK, is also required for the utilization of anhydro-N-acetylmuramic acid (anhMurNAc) either imported from the medium or derived from its own cell wall murein, and thus plays a role in cell wall recycling. This is N-acetylmuramic acid 6-phosphate etherase 1 from Vibrio cholerae serotype O1 (strain ATCC 39315 / El Tor Inaba N16961).